The following is a 179-amino-acid chain: Large ribosomal subunit protein uL6 (179 aa).

This sequence belongs to the universal ribosomal protein uL6 family. In terms of assembly, part of the 50S ribosomal subunit.

Functionally, this protein binds to the 23S rRNA, and is important in its secondary structure. It is located near the subunit interface in the base of the L7/L12 stalk, and near the tRNA binding site of the peptidyltransferase center. The polypeptide is Large ribosomal subunit protein uL6 (Bacillus subtilis (strain 168)).